The sequence spans 258 residues: Isoprenyl transferase (258 aa).

Asp38 is an active-site residue. Asp38 contacts Mg(2+). Substrate is bound by residues 39-42 (GNGR), Trp43, Arg51, His55, and 83-85 (STE). Residue Asn86 is the Proton acceptor of the active site. Residues Trp87, Arg89, Arg206, and 212–214 (RIS) contribute to the substrate site. A Mg(2+)-binding site is contributed by Glu225.

The protein belongs to the UPP synthase family. As to quaternary structure, homodimer. Requires Mg(2+) as cofactor.

Catalyzes the condensation of isopentenyl diphosphate (IPP) with allylic pyrophosphates generating different type of terpenoids. This chain is Isoprenyl transferase, found in Bacillus cereus (strain ATCC 14579 / DSM 31 / CCUG 7414 / JCM 2152 / NBRC 15305 / NCIMB 9373 / NCTC 2599 / NRRL B-3711).